The sequence spans 118 residues: Large ribosomal subunit protein uL24 (118 aa).

The interval 1-24 (MSEQPHKQRTRTKRASLHEKQDQV) is disordered.

It belongs to the universal ribosomal protein uL24 family. Part of the 50S ribosomal subunit.

One of two assembly initiator proteins, it binds directly to the 5'-end of the 23S rRNA, where it nucleates assembly of the 50S subunit. Functionally, located at the polypeptide exit tunnel on the outside of the subunit. The protein is Large ribosomal subunit protein uL24 of Halobacterium salinarum (strain ATCC 700922 / JCM 11081 / NRC-1) (Halobacterium halobium).